The primary structure comprises 303 residues: Quinolinate synthase (303 aa).

Iminosuccinate contacts are provided by H24 and S41. A [4Fe-4S] cluster-binding site is contributed by C86. Residues 112–114 and S129 contribute to the iminosuccinate site; that span reads YIN. Position 172 (C172) interacts with [4Fe-4S] cluster. Iminosuccinate-binding positions include 198–200 and T215; that span reads HPE. C260 contacts [4Fe-4S] cluster.

This sequence belongs to the quinolinate synthase family. Type 2 subfamily. Requires [4Fe-4S] cluster as cofactor.

Its subcellular location is the cytoplasm. It catalyses the reaction iminosuccinate + dihydroxyacetone phosphate = quinolinate + phosphate + 2 H2O + H(+). It participates in cofactor biosynthesis; NAD(+) biosynthesis; quinolinate from iminoaspartate: step 1/1. In terms of biological role, catalyzes the condensation of iminoaspartate with dihydroxyacetone phosphate to form quinolinate. This chain is Quinolinate synthase, found in Caldicellulosiruptor saccharolyticus (strain ATCC 43494 / DSM 8903 / Tp8T 6331).